The primary structure comprises 556 residues: Oxygen-dependent choline dehydrogenase (556 aa).

Asp-4–Glu-33 is an FAD binding site. The active-site Proton acceptor is His-473.

Belongs to the GMC oxidoreductase family. FAD is required as a cofactor.

The catalysed reaction is choline + A = betaine aldehyde + AH2. It carries out the reaction betaine aldehyde + NAD(+) + H2O = glycine betaine + NADH + 2 H(+). It participates in amine and polyamine biosynthesis; betaine biosynthesis via choline pathway; betaine aldehyde from choline (cytochrome c reductase route): step 1/1. Its function is as follows. Involved in the biosynthesis of the osmoprotectant glycine betaine. Catalyzes the oxidation of choline to betaine aldehyde and betaine aldehyde to glycine betaine at the same rate. This chain is Oxygen-dependent choline dehydrogenase, found in Escherichia coli O6:K15:H31 (strain 536 / UPEC).